The sequence spans 733 residues: DNA repair and recombination protein RAD54-like (733 aa).

The disordered stretch occupies residues 1–35 (LAKRKAGGEEEDGEWRPPATQKRQKAGSEAESADC). One can recognise a Helicase ATP-binding domain in the interval 159-334 (SRRIPGSHGC…FSLVHFVNSG (176 aa)). Residue 172–179 (DEMGLGKT) participates in ATP binding. A DEGH box motif is present at residues 285–288 (DEGH). The 155-residue stretch at 488-642 (LVLDYILAVT…CVVDEEQDVE (155 aa)) folds into the Helicase C-terminal domain. Lys-504 carries the N6-acetyllysine modification. Position 561 is a phosphoserine; by NEK1 (Ser-561).

It belongs to the SNF2/RAD54 helicase family. In terms of assembly, homohexamer. Interacts (via N-terminus) with RAD51. Interacts with NAP1L1. Interacts with BRD9; this interaction orchestrates RAD51-RAD54 complex formation. Post-translationally, acetylated. Acetylation promotes interaction with BRD9, and subsequently with RAD54, which is essential for homologous recombination (HR). In terms of processing, phosphorylated. Phosphorylation at Ser-561 by NEK1 specifically in G2 phase allows efficient removal of RAD51 filaments from DNA. Highly expressed in bursa, thymus, testis, and ovary. Low level of expression seen in all other organs tested.

Its subcellular location is the nucleus. In terms of biological role, plays an essential role in homologous recombination (HR) which is a major pathway for repairing DNA double-strand breaks (DSBs), single-stranded DNA (ssDNA) gaps, and stalled or collapsed replication forks. Acts as a molecular motor during the homology search and guides RAD51 ssDNA along a donor dsDNA thereby changing the homology search from the diffusion-based mechanism to a motor-guided mechanism. Plays also an essential role in RAD51-mediated synaptic complex formation which consists of three strands encased in a protein filament formed once homology is recognized. Once DNA strand exchange occured, dissociates RAD51 from nucleoprotein filaments formed on dsDNA. This is DNA repair and recombination protein RAD54-like (RAD54L) from Gallus gallus (Chicken).